The primary structure comprises 400 residues: Glutamyl-tRNA reductase (400 aa).

Residues 45 to 48 (TCNR), Ser103, 108 to 110 (EDQ), and Gln114 contribute to the substrate site. Catalysis depends on Cys46, which acts as the Nucleophile. 179–184 (GYGEIG) contacts NADP(+).

Belongs to the glutamyl-tRNA reductase family. In terms of assembly, homodimer.

The enzyme catalyses (S)-4-amino-5-oxopentanoate + tRNA(Glu) + NADP(+) = L-glutamyl-tRNA(Glu) + NADPH + H(+). It participates in porphyrin-containing compound metabolism; protoporphyrin-IX biosynthesis; 5-aminolevulinate from L-glutamyl-tRNA(Glu): step 1/2. Catalyzes the NADPH-dependent reduction of glutamyl-tRNA(Glu) to glutamate 1-semialdehyde (GSA). The sequence is that of Glutamyl-tRNA reductase from Clostridium perfringens (strain SM101 / Type A).